A 247-amino-acid chain; its full sequence is Peptidyl-prolyl cis-trans isomerase FKBP17-2, chloroplastic (247 aa).

Residues 1 to 79 (MANLFTATAP…SSLTRRFGIG (79 aa)) constitute a chloroplast transit peptide. The disordered stretch occupies residues 26 to 64 (QCYASSSNPPEPESSSPPPPPPPPQPLASQQKRKKNVET). The span at 34 to 51 (PPEPESSSPPPPPPPPQP) shows a compositional bias: pro residues. Residues 141–243 (GDLVVIDLKG…EYIVEIDRVS (103 aa)) form the PPIase FKBP-type domain.

This sequence belongs to the FKBP-type PPIase family.

Its subcellular location is the plastid. The protein resides in the chloroplast thylakoid lumen. The enzyme catalyses [protein]-peptidylproline (omega=180) = [protein]-peptidylproline (omega=0). Functionally, PPIases accelerate the folding of proteins. It catalyzes the cis-trans isomerization of proline imidic peptide bonds in oligopeptides. This is Peptidyl-prolyl cis-trans isomerase FKBP17-2, chloroplastic (FKBP17-2) from Arabidopsis thaliana (Mouse-ear cress).